Here is a 387-residue protein sequence, read N- to C-terminus: 3-ketoacyl-CoA thiolase (387 aa).

Cysteine 91 serves as the catalytic Acyl-thioester intermediate. Catalysis depends on proton acceptor residues histidine 343 and cysteine 373.

Belongs to the thiolase-like superfamily. Thiolase family. In terms of assembly, heterotetramer of two alpha chains (FadB) and two beta chains (FadA).

The protein localises to the cytoplasm. It carries out the reaction an acyl-CoA + acetyl-CoA = a 3-oxoacyl-CoA + CoA. Its pathway is lipid metabolism; fatty acid beta-oxidation. Functionally, catalyzes the final step of fatty acid oxidation in which acetyl-CoA is released and the CoA ester of a fatty acid two carbons shorter is formed. This Shewanella sp. (strain W3-18-1) protein is 3-ketoacyl-CoA thiolase.